The primary structure comprises 804 residues: MSFQHKEIEKKWQTYWLENKTFATLDNNEKQKFYALDMFPYPSGAGLHVGHPEGYTATDILSRMKRMQGYDVLHPMGWDAFGLPAEQYALDTGNDPAVFTKQNIDNFRRQIQALGFSYDWDREINTTDPEYYKWTQWIFLKLYEKGLAYVDEVPVNWCPALGTVLANEEVIDGKSERGGHPVERRPMKQWMLKITAYADRLLEDLEELDWPESIKDMQRNWIGRSEGAHVHFAIDGHDDSFTVFTTRPDTLFGATYTVLAPEHALVENITTAEQKEAVEAYIKEIQSKSDLERTDLAKTKTGVFTGAYAINPVNGEKLPIWIADYVLASYGTGAVMAVPGHDERDFEFAKTFGLPVKEVVKGGNVEEAAYTGDGEHVNSDFLNGLHKQEAIEKVIAWLEETKNGEKKVTYRLRDWLFSRQRYWGEPIPVIHWEDGTSTAVPEEELPLILPKTDEIKPSGTGESPLANIKEWVEVTDPETGKKGRRETNTMPQWAGSCWYFLRYIDPHNPDQLASPEKLEKWLPVDMYIGGAEHAVLHLLYARFWHKFLYDIGVVPTKEPFQKLYNQGMILGENNEKMSKSKGNVVNPDEIVASHGADTLRLYEMFMGPLDASIAWSESGLDGARRFLDRVWRLFIEDSGELNGKIVEGAGETLERVYHETVMKVTDHYEGLRFNTGISQLMVFINEAYKATELPKEYMEGFVKLLSPVAPHLAEELWEKLGHSGTIAYEAWPVYDETKLVDDEVEIVVQLNGKVKAKLQVPADATKEQLEQLAQADEKVKEQLEGKTIRKIIAVPGKLVNIVAN.

Residues 40–51 (PYPSGAGLHVGH) carry the 'HIGH' region motif. The 'KMSKS' region motif lies at 576–580 (KMSKS). Residue Lys579 participates in ATP binding.

The protein belongs to the class-I aminoacyl-tRNA synthetase family.

It is found in the cytoplasm. The catalysed reaction is tRNA(Leu) + L-leucine + ATP = L-leucyl-tRNA(Leu) + AMP + diphosphate. The sequence is that of Leucine--tRNA ligase from Bacillus subtilis (strain 168).